Here is a 218-residue protein sequence, read N- to C-terminus: Translation initiation factor 6 (218 aa).

The protein belongs to the eIF-6 family.

In terms of biological role, binds to the 50S ribosomal subunit and prevents its association with the 30S ribosomal subunit to form the 70S initiation complex. In Methanosarcina acetivorans (strain ATCC 35395 / DSM 2834 / JCM 12185 / C2A), this protein is Translation initiation factor 6.